Here is an 84-residue protein sequence, read N- to C-terminus: UPF0410 protein YmgE (84 aa).

A run of 3 helical transmembrane segments spans residues 1–21, 27–47, and 58–78; these read MGII…KLIM, GGFF…GWLA, and GFNL…LGVF.

This sequence belongs to the UPF0410 family.

Its subcellular location is the cell inner membrane. This chain is UPF0410 protein YmgE (ymgE), found in Escherichia coli O127:H6 (strain E2348/69 / EPEC).